A 298-amino-acid polypeptide reads, in one-letter code: tRNA-cytidine(32) 2-sulfurtransferase (298 aa).

A PP-loop motif motif is present at residues 48–53 (SGGKDS). Positions 123, 126, and 214 each coordinate [4Fe-4S] cluster.

It belongs to the TtcA family. In terms of assembly, homodimer. It depends on Mg(2+) as a cofactor. Requires [4Fe-4S] cluster as cofactor.

The protein resides in the cytoplasm. The enzyme catalyses cytidine(32) in tRNA + S-sulfanyl-L-cysteinyl-[cysteine desulfurase] + AH2 + ATP = 2-thiocytidine(32) in tRNA + L-cysteinyl-[cysteine desulfurase] + A + AMP + diphosphate + H(+). It participates in tRNA modification. Its function is as follows. Catalyzes the ATP-dependent 2-thiolation of cytidine in position 32 of tRNA, to form 2-thiocytidine (s(2)C32). The sulfur atoms are provided by the cysteine/cysteine desulfurase (IscS) system. This Nitrosospira multiformis (strain ATCC 25196 / NCIMB 11849 / C 71) protein is tRNA-cytidine(32) 2-sulfurtransferase.